A 261-amino-acid polypeptide reads, in one-letter code: Cytochrome c oxidase subunit 3 (261 aa).

The Mitochondrial matrix portion of the chain corresponds to 1–15 (MAHQAHSYHMVDPSP). The helical transmembrane segment at 16–34 (WPIFGAITALLTTSGLIMW) threads the bilayer. At 35-40 (FHYNSI) the chain is on the mitochondrial intermembrane side. Residues 41-66 (ALLTAGLLSMLLVMIQWWRDVVREST) form a helical membrane-spanning segment. Topologically, residues 67–72 (FQGHHT) are mitochondrial matrix. A helical membrane pass occupies residues 73–105 (PTVQKGLRYGMILFITSEAFFFLGFFWAFFHSS). Residues 106 to 128 (LAPTPELGGQWPPTGIKPLNPLE) lie on the Mitochondrial intermembrane side of the membrane. Residues 129–152 (VPLLNTAILLASGVTVTWAHHSIT) traverse the membrane as a helical segment. Residues 153–155 (EGN) lie on the Mitochondrial matrix side of the membrane. The chain crosses the membrane as a helical span at residues 156–183 (RKQAIHALTLTILLGFYFTALQAMEYHE). Topologically, residues 184–190 (ASFSIAD) are mitochondrial intermembrane. A helical transmembrane segment spans residues 191 to 223 (SVYGSTFFVATGFHGLHVIIGSSFLTICLLRLI). Topologically, residues 224 to 232 (KFHFTSNHH) are mitochondrial matrix. The helical transmembrane segment at 233 to 256 (FGFEAAAWYWHFVDIIWLFLYMSM) threads the bilayer. The Mitochondrial intermembrane portion of the chain corresponds to 257–261 (YWWGS).

This sequence belongs to the cytochrome c oxidase subunit 3 family. In terms of assembly, component of the cytochrome c oxidase (complex IV, CIV), a multisubunit enzyme composed of 14 subunits. The complex is composed of a catalytic core of 3 subunits MT-CO1, MT-CO2 and MT-CO3, encoded in the mitochondrial DNA, and 11 supernumerary subunits COX4I, COX5A, COX5B, COX6A, COX6B, COX6C, COX7A, COX7B, COX7C, COX8 and NDUFA4, which are encoded in the nuclear genome. The complex exists as a monomer or a dimer and forms supercomplexes (SCs) in the inner mitochondrial membrane with NADH-ubiquinone oxidoreductase (complex I, CI) and ubiquinol-cytochrome c oxidoreductase (cytochrome b-c1 complex, complex III, CIII), resulting in different assemblies (supercomplex SCI(1)III(2)IV(1) and megacomplex MCI(2)III(2)IV(2)).

It is found in the mitochondrion inner membrane. The enzyme catalyses 4 Fe(II)-[cytochrome c] + O2 + 8 H(+)(in) = 4 Fe(III)-[cytochrome c] + 2 H2O + 4 H(+)(out). In terms of biological role, component of the cytochrome c oxidase, the last enzyme in the mitochondrial electron transport chain which drives oxidative phosphorylation. The respiratory chain contains 3 multisubunit complexes succinate dehydrogenase (complex II, CII), ubiquinol-cytochrome c oxidoreductase (cytochrome b-c1 complex, complex III, CIII) and cytochrome c oxidase (complex IV, CIV), that cooperate to transfer electrons derived from NADH and succinate to molecular oxygen, creating an electrochemical gradient over the inner membrane that drives transmembrane transport and the ATP synthase. Cytochrome c oxidase is the component of the respiratory chain that catalyzes the reduction of oxygen to water. Electrons originating from reduced cytochrome c in the intermembrane space (IMS) are transferred via the dinuclear copper A center (CU(A)) of subunit 2 and heme A of subunit 1 to the active site in subunit 1, a binuclear center (BNC) formed by heme A3 and copper B (CU(B)). The BNC reduces molecular oxygen to 2 water molecules using 4 electrons from cytochrome c in the IMS and 4 protons from the mitochondrial matrix. The polypeptide is Cytochrome c oxidase subunit 3 (MT-CO3) (Coturnix japonica (Japanese quail)).